The sequence spans 349 residues: Twinfilin-2 (349 aa).

Ala-2 carries the N-acetylalanine modification. 2 ADF-H domains span residues 4 to 139 and 177 to 313; these read QTGI…KHLS and GLAF…DEVH. Residue Lys-14 is modified to N6-acetyllysine. Position 309 is a phosphotyrosine (Tyr-309). A disordered region spans residues 322–349; it reads AFAKPKGPGGKRGHKRLIRGPGENGDDS. Over residues 330–339 the composition is skewed to basic residues; it reads GGKRGHKRLI. A Phosphoserine modification is found at Ser-349.

Belongs to the actin-binding proteins ADF family. Twinfilin subfamily. In terms of assembly, interacts with G-actin; ADP-actin form and capping protein (CP). May also be able to interact with TWF1 and phosphoinositides, PI(4,5)P2. When bound to PI(4,5)P2, it is down-regulated. Interacts with MYO7A. Post-translationally, in vitro, phosphorylated by PRKCZ, CK2 and SRC. In terms of tissue distribution, ubiquitously expressed (at protein level).

Its subcellular location is the cytoplasm. It localises to the cytoskeleton. The protein resides in the perinuclear region. The protein localises to the cell projection. It is found in the stereocilium. In terms of biological role, actin-binding protein involved in motile and morphological processes. Inhibits actin polymerization, likely by sequestering G-actin. By capping the barbed ends of filaments, it also regulates motility. Seems to play an important role in clathrin-mediated endocytosis and distribution of endocytic organelles. May play a role in regulating the mature length of the middle and short rows of stereocilia. This is Twinfilin-2 (TWF2) from Homo sapiens (Human).